We begin with the raw amino-acid sequence, 162 residues long: Putative ripening-related protein 7 (162 aa).

The first 30 residues, 1 to 30, serve as a signal peptide directing secretion; the sequence is MAAAAASTKIVAVVVAVLLAILEMPSCAVA.

The protein belongs to the kiwellin family.

It localises to the secreted. This is Putative ripening-related protein 7 from Oryza sativa subsp. japonica (Rice).